Reading from the N-terminus, the 174-residue chain is Crossover junction endodeoxyribonuclease RuvC (174 aa).

Residues Asp-8, Glu-68, and Asp-140 contribute to the active site. Positions 8, 68, and 140 each coordinate Mg(2+).

It belongs to the RuvC family. In terms of assembly, homodimer which binds Holliday junction (HJ) DNA. The HJ becomes 2-fold symmetrical on binding to RuvC with unstacked arms; it has a different conformation from HJ DNA in complex with RuvA. In the full resolvosome a probable DNA-RuvA(4)-RuvB(12)-RuvC(2) complex forms which resolves the HJ. Mg(2+) serves as cofactor.

The protein localises to the cytoplasm. It catalyses the reaction Endonucleolytic cleavage at a junction such as a reciprocal single-stranded crossover between two homologous DNA duplexes (Holliday junction).. Its function is as follows. The RuvA-RuvB-RuvC complex processes Holliday junction (HJ) DNA during genetic recombination and DNA repair. Endonuclease that resolves HJ intermediates. Cleaves cruciform DNA by making single-stranded nicks across the HJ at symmetrical positions within the homologous arms, yielding a 5'-phosphate and a 3'-hydroxyl group; requires a central core of homology in the junction. The consensus cleavage sequence is 5'-(A/T)TT(C/G)-3'. Cleavage occurs on the 3'-side of the TT dinucleotide at the point of strand exchange. HJ branch migration catalyzed by RuvA-RuvB allows RuvC to scan DNA until it finds its consensus sequence, where it cleaves and resolves the cruciform DNA. The sequence is that of Crossover junction endodeoxyribonuclease RuvC from Legionella pneumophila subsp. pneumophila (strain Philadelphia 1 / ATCC 33152 / DSM 7513).